Consider the following 170-residue polypeptide: Ribosome maturation factor RimM (170 aa).

A PRC barrel domain is found at 95–168; it reads EDAYYYHEIV…IIKVQLMEGM (74 aa).

Belongs to the RimM family. As to quaternary structure, binds ribosomal protein uS19.

It localises to the cytoplasm. Functionally, an accessory protein needed during the final step in the assembly of 30S ribosomal subunit, possibly for assembly of the head region. Essential for efficient processing of 16S rRNA. May be needed both before and after RbfA during the maturation of 16S rRNA. It has affinity for free ribosomal 30S subunits but not for 70S ribosomes. The protein is Ribosome maturation factor RimM of Oceanobacillus iheyensis (strain DSM 14371 / CIP 107618 / JCM 11309 / KCTC 3954 / HTE831).